The following is an 896-amino-acid chain: Translation initiation factor IF-2 (896 aa).

Basic and acidic residues predominate over residues 93 to 219; it reads VKRDPQEAER…RMAEENEKNW (127 aa). Residues 93 to 307 are disordered; the sequence is VKRDPQEAER…GSALQQGFQK (215 aa). Over residues 256 to 271 the composition is skewed to basic residues; it reads GRSRSSKAARPAKKGN. The span at 272–285 shows a compositional bias: basic and acidic residues; that stretch reads KHAESKADREEARA. In terms of domain architecture, tr-type G spans 395–564; it reads PRAPVVTIMG…LLQAEVLELK (170 aa). The tract at residues 404–411 is G1; the sequence is GHVDHGKT. 404–411 serves as a coordination point for GTP; sequence GHVDHGKT. A G2 region spans residues 429–433; the sequence is GITQH. The interval 450 to 453 is G3; it reads DTPG. GTP contacts are provided by residues 450 to 454 and 504 to 507; these read DTPGH and NKID. Residues 504-507 are G4; sequence NKID. A G5 region spans residues 540 to 542; that stretch reads SAK.

It belongs to the TRAFAC class translation factor GTPase superfamily. Classic translation factor GTPase family. IF-2 subfamily.

The protein resides in the cytoplasm. Its function is as follows. One of the essential components for the initiation of protein synthesis. Protects formylmethionyl-tRNA from spontaneous hydrolysis and promotes its binding to the 30S ribosomal subunits. Also involved in the hydrolysis of GTP during the formation of the 70S ribosomal complex. The chain is Translation initiation factor IF-2 from Klebsiella pneumoniae subsp. pneumoniae (strain ATCC 700721 / MGH 78578).